The chain runs to 261 residues: Large ribosomal subunit protein uL2 (261 aa).

The interval 207–233 (VEHPHGGGNHQHIGKASTVKRGTPPGR) is disordered.

This sequence belongs to the universal ribosomal protein uL2 family.

It is found in the cytoplasm. This Aedes albopictus (Asian tiger mosquito) protein is Large ribosomal subunit protein uL2 (RpL8).